We begin with the raw amino-acid sequence, 306 residues long: 17-beta-hydroxysteroid dehydrogenase type 3 (306 aa).

44 to 73 (GQWAVITGAGDGIGKAYSFELARHGLNVVL) contacts NADP(+). Position 181 (S181) interacts with substrate. Y194 serves as the catalytic Proton acceptor.

Belongs to the short-chain dehydrogenases/reductases (SDR) family. 17-beta-HSD 3 subfamily.

The protein resides in the endoplasmic reticulum. It carries out the reaction a 17beta-hydroxy steroid + NADP(+) = a 17-oxo steroid + NADPH + H(+). The enzyme catalyses testosterone + NADP(+) = androst-4-ene-3,17-dione + NADPH + H(+). The catalysed reaction is 17beta-estradiol + NADP(+) = estrone + NADPH + H(+). It catalyses the reaction 3beta-hydroxyandrost-5-en-17-one + NADPH + H(+) = androst-5-en-3beta,17beta-diol + NADP(+). It carries out the reaction 17beta-hydroxy-5alpha-androstan-3-one + NADP(+) = 5alpha-androstan-3,17-dione + NADPH + H(+). The enzyme catalyses androsterone + NADPH + H(+) = 5alpha-androstane-3alpha,17beta-diol + NADP(+). The catalysed reaction is 3beta-hydroxy-5alpha-androstan-17-one + NADPH + H(+) = 5alpha-androstane-3beta,17beta-diol + NADP(+). It catalyses the reaction androst-4-ene-3,11,17-trione + NADPH + H(+) = 17beta-hydroxyandrost-4-ene-3,11-dione + NADP(+). It carries out the reaction 11beta-hydroxyandrost-4-ene-3,17-dione + NADPH + H(+) = 11beta,17beta-dihydroxyandrost-4-ene-3-one + NADP(+). It functions in the pathway hormone biosynthesis; testosterone biosynthesis. Its pathway is steroid metabolism. Its function is as follows. Catalyzes the conversion of 17-oxosteroids to 17beta-hydroxysteroids. Favors the reduction of androstenedione to testosterone. Testosterone is the key androgen driving male development and function. Uses NADPH while the two other EDH17B enzymes use NADH. Androgens such as epiandrosterone, dehydroepiandrosterone, androsterone and androstanedione are accepted as substrates and reduced at C-17. Can reduce 11-ketoandrostenedione as well as 11beta-hydroxyandrostenedione at C-17 to the respective testosterone forms. Plays a role in the rate-limiting-step for the maximum level of testosterone production by the testis but does not affect basal testosterone production. This chain is 17-beta-hydroxysteroid dehydrogenase type 3, found in Rattus norvegicus (Rat).